An 89-amino-acid polypeptide reads, in one-letter code: Defensin-like protein 78 (89 aa).

The N-terminal stretch at 1–30 (MANNMVASPYKNTFMMIALVLILLISGSEA) is a signal peptide. 4 disulfides stabilise this stretch: Cys40-Cys75, Cys44-Cys67, Cys52-Cys73, and Cys56-Cys74.

It belongs to the DEFL family.

Its subcellular location is the secreted. The sequence is that of Defensin-like protein 78 from Arabidopsis thaliana (Mouse-ear cress).